We begin with the raw amino-acid sequence, 394 residues long: Cysteine protease ATG4B (394 aa).

Catalysis depends on C74, which acts as the Nucleophile. Catalysis depends on residues D280 and H282. Positions 389 to 392 (FEIL) match the LIR motif.

Belongs to the peptidase C54 family.

The protein resides in the cytoplasm. It is found in the cytosol. It localises to the cytoplasmic vesicle. Its subcellular location is the autophagosome. The protein localises to the endoplasmic reticulum. The protein resides in the mitochondrion. It catalyses the reaction [protein]-C-terminal L-amino acid-glycyl-phosphatidylethanolamide + H2O = [protein]-C-terminal L-amino acid-glycine + a 1,2-diacyl-sn-glycero-3-phosphoethanolamine. The catalysed reaction is [protein]-C-terminal L-amino acid-glycyl-phosphatidylserine + H2O = [protein]-C-terminal L-amino acid-glycine + a 1,2-diacyl-sn-glycero-3-phospho-L-serine. Functionally, cysteine protease that plays a key role in autophagy by mediating both proteolytic activation and delipidation of ATG8 family proteins. Required for canonical autophagy (macroautophagy), non-canonical autophagy as well as for mitophagy. The protease activity is required for proteolytic activation of ATG8 family proteins: cleaves the C-terminal amino acid of ATG8 proteins to reveal a C-terminal glycine. Exposure of the glycine at the C-terminus is essential for ATG8 proteins conjugation to phosphatidylethanolamine (PE) and insertion to membranes, which is necessary for autophagy. Protease activity is also required to counteract formation of high-molecular weight conjugates of ATG8 proteins (ATG8ylation): acts as a deubiquitinating-like enzyme that removes ATG8 conjugated to other proteins, such as ATG3. In addition to the protease activity, also mediates delipidation of ATG8 family proteins. Catalyzes delipidation of PE-conjugated forms of ATG8 proteins during macroautophagy. Also involved in non-canonical autophagy, a parallel pathway involving conjugation of ATG8 proteins to single membranes at endolysosomal compartments, by catalyzing delipidation of ATG8 proteins conjugated to phosphatidylserine (PS). This Danio rerio (Zebrafish) protein is Cysteine protease ATG4B.